Reading from the N-terminus, the 580-residue chain is NADH-ubiquinone oxidoreductase chain 5 (580 aa).

16 helical membrane-spanning segments follow: residues 12-32 (FYIL…FLLM), 50-70 (IVMT…VLLI), 92-112 (ILLV…PNLI), 113-133 (SILL…IYFQ), 153-173 (VALL…YIFY), 176-196 (MMKN…AAMT), 218-240 (SALV…FNIL), 249-269 (FLLL…NFEF), 274-294 (IIAL…SIGY), 300-320 (FHLL…GVII), 343-363 (CSCF…AGFY), 378-400 (NFFS…FRLV), 427-447 (IFFL…LMFF), 464-484 (MVCL…FFFI), 500-520 (MWFM…ILGM), and 560-580 (IYLL…LFLN).

Belongs to the complex I subunit 5 family.

It localises to the mitochondrion inner membrane. It carries out the reaction a ubiquinone + NADH + 5 H(+)(in) = a ubiquinol + NAD(+) + 4 H(+)(out). Core subunit of the mitochondrial membrane respiratory chain NADH dehydrogenase (Complex I) that is believed to belong to the minimal assembly required for catalysis. Complex I functions in the transfer of electrons from NADH to the respiratory chain. The immediate electron acceptor for the enzyme is believed to be ubiquinone. The sequence is that of NADH-ubiquinone oxidoreductase chain 5 from Aedes aegypti (Yellowfever mosquito).